The sequence spans 854 residues: Periodic tryptophan protein 2 homolog (854 aa).

WD repeat units follow at residues 9–52 (NLVG…TFPF), 53–93 (ENHK…LHYF), 94–132 (NFKS…EERE), 144–183 (GHFD…GFHP), 188–227 (GHKN…QAGE), 252–291 (NQNS…MLYQ), 294–334 (ITQS…YVLK), 337–376 (SHYD…CIVT), 379–418 (QHTS…NFRT), 422–464 (PSRV…ETLA), 465–504 (GHEG…GIVE), 507–546 (PIPS…QTSL), and 569–608 (SLNK…LIKK). Threonine 640 carries the post-translational modification Phosphothreonine. Serine 645 is modified (phosphoserine). The stretch at 668 to 709 (TRPEIICHGVQFSPSGGAFAAATTEGLMIYSLYNDFLFDPIN) is one WD 14 repeat.

It belongs to the WD repeat PWP2 family.

In Schizosaccharomyces pombe (strain 972 / ATCC 24843) (Fission yeast), this protein is Periodic tryptophan protein 2 homolog.